A 207-amino-acid chain; its full sequence is Small ribosomal subunit protein uS4 (207 aa).

Positions 32–55 are disordered; it reads CKLDSKPGQHGRTSGARTSDYGTQ. Over residues 42 to 53 the composition is skewed to polar residues; that stretch reads GRTSGARTSDYG. Residues 97 to 158 form the S4 RNA-binding domain; the sequence is SRLDNVVYRM…TKKKQARILE (62 aa).

Belongs to the universal ribosomal protein uS4 family. In terms of assembly, part of the 30S ribosomal subunit. Contacts protein S5. The interaction surface between S4 and S5 is involved in control of translational fidelity.

Its function is as follows. One of the primary rRNA binding proteins, it binds directly to 16S rRNA where it nucleates assembly of the body of the 30S subunit. In terms of biological role, with S5 and S12 plays an important role in translational accuracy. This chain is Small ribosomal subunit protein uS4, found in Paraburkholderia phytofirmans (strain DSM 17436 / LMG 22146 / PsJN) (Burkholderia phytofirmans).